We begin with the raw amino-acid sequence, 461 residues long: Alcaligin biosynthesis enzyme (461 aa).

FAD is bound at residue 9–15 (VAIGIGP).

It belongs to the lysine N(6)-hydroxylase/L-ornithine N(5)-oxygenase family. Requires FAD as cofactor.

The protein operates within siderophore biosynthesis; alcaligin biosynthesis. The polypeptide is Alcaligin biosynthesis enzyme (alcA) (Bordetella parapertussis (strain 12822 / ATCC BAA-587 / NCTC 13253)).